The primary structure comprises 449 residues: Methionine aminopeptidase 2 (449 aa).

Residues 1 to 91 (MAAQAAPELA…PRIPLTTLFP (91 aa)) form a disordered region. Residues 34–50 (EEAENEGDSEDDRDDEQ) are compositionally biased toward acidic residues. The segment covering 61–75 (KKKKKKRPKKKKKTA) has biased composition (basic residues). Residue histidine 199 participates in substrate binding. A divalent metal cation contacts are provided by aspartate 219, aspartate 230, and histidine 299. Residue histidine 307 coordinates substrate. Residues glutamate 335 and glutamate 430 each coordinate a divalent metal cation.

The protein belongs to the peptidase M24A family. Methionine aminopeptidase eukaryotic type 2 subfamily. Co(2+) is required as a cofactor. Requires Zn(2+) as cofactor. The cofactor is Mn(2+). Fe(2+) serves as cofactor.

It is found in the cytoplasm. The enzyme catalyses Release of N-terminal amino acids, preferentially methionine, from peptides and arylamides.. In terms of biological role, cotranslationally removes the N-terminal methionine from nascent proteins. The N-terminal methionine is often cleaved when the second residue in the primary sequence is small and uncharged (Met-Ala-, Cys, Gly, Pro, Ser, Thr, or Val). This chain is Methionine aminopeptidase 2, found in Trichophyton verrucosum (strain HKI 0517).